A 64-amino-acid chain; its full sequence is UPF0370 protein YE1145 (64 aa).

A helical membrane pass occupies residues 3–23; the sequence is WLADYWWVVLIILVGMILNGI. The disordered stretch occupies residues 36–64; that stretch reads SNKPEIPPHRDNNAQWDDDDDWPDKDKKK.

The protein belongs to the UPF0370 family.

The protein resides in the cell membrane. The polypeptide is UPF0370 protein YE1145 (Yersinia enterocolitica serotype O:8 / biotype 1B (strain NCTC 13174 / 8081)).